The chain runs to 133 residues: Peptide methionine sulfoxide reductase MsrB (133 aa).

One can recognise a MsrB domain in the interval Leu-8–Arg-130. Zn(2+) is bound by residues Cys-47, Cys-50, Cys-96, and Cys-99. The active-site Nucleophile is the Cys-119.

It belongs to the MsrB Met sulfoxide reductase family. The cofactor is Zn(2+).

The enzyme catalyses L-methionyl-[protein] + [thioredoxin]-disulfide + H2O = L-methionyl-(R)-S-oxide-[protein] + [thioredoxin]-dithiol. The sequence is that of Peptide methionine sulfoxide reductase MsrB from Pseudomonas putida (strain W619).